Here is a 679-residue protein sequence, read N- to C-terminus: Protein asunder (679 aa).

The stretch at 519–541 forms a coiled coil; the sequence is RLKVNKTKDQYRLFYRELEQLIQ. The interval 564 to 610 is disordered; the sequence is GDASNKSDPSAAHLRSYTESPLSPERLEPTNSVNSSSSSILKASKRR. The Nuclear localization signal (NLS) motif lies at 604 to 610; sequence LKASKRR.

It belongs to the Integrator subunit 13 family. Belongs to the multiprotein complex Integrator, at least composed of IntS1, IntS2, IntS3, IntS4, omd/IntS5, IntS6, defl/IntS7, IntS8, IntS9, IntS10, IntS11, IntS12, asun/IntS13, IntS14 and IntS15. The core complex associates with protein phosphatase 2A subunits mts/PP2A and Pp2A-29B, to form the Integrator-PP2A (INTAC) complex. Phosphorylated.

The protein localises to the nucleus. Its subcellular location is the cytoplasm. The protein resides in the perinuclear region. In terms of biological role, component of the integrator complex, a multiprotein complex that terminates RNA polymerase II (Pol II) transcription in the promoter-proximal region of genes. The integrator complex provides a quality checkpoint during transcription elongation by driving premature transcription termination of transcripts that are unfavorably configured for transcriptional elongation: the complex terminates transcription by (1) catalyzing dephosphorylation of the C-terminal domain (CTD) of Pol II subunit Polr2A/Rbp1 and Spt5, and (2) degrading the exiting nascent RNA transcript via endonuclease activity. The integrator complex is also involved in the 3'-end processing of the U7 snRNA, and also the spliceosomal snRNAs U1, U2, U4 and U5. In Drosophila mojavensis (Fruit fly), this protein is Protein asunder (asun).